The primary structure comprises 263 residues: uncharacterized protein (263 aa).

The protein belongs to the flavoredoxin family. FMN serves as cofactor.

This is an uncharacterized protein from Aeropyrum pernix (strain ATCC 700893 / DSM 11879 / JCM 9820 / NBRC 100138 / K1).